The sequence spans 451 residues: Heat shock factor protein (451 aa).

The DNA-binding element occupies 12–117 (VPAFLAKLWT…LLENIKRKVN (106 aa)). Disordered regions lie at residues 210–273 (LNDS…LEAS) and 285–307 (LTPS…PISP). The segment covering 232–246 (PSSTSYPVSGFTDSS) has biased composition (polar residues).

It belongs to the HSF family. Homotrimer. Exhibits temperature-dependent phosphorylation.

The protein localises to the nucleus. Its function is as follows. DNA-binding protein that specifically binds heat shock promoter elements (HSE) and activates transcription. The chain is Heat shock factor protein (hsf1) from Xenopus laevis (African clawed frog).